The primary structure comprises 397 residues: Homoserine O-acetyltransferase (397 aa).

Residues 58 to 368 form the AB hydrolase-1 domain; sequence NAVLVLHALT…EAKWGHDAFL (311 aa). The active-site Nucleophile is the serine 164. Residue arginine 233 participates in substrate binding. Catalysis depends on residues aspartate 331 and histidine 364. Substrate is bound at residue aspartate 365.

This sequence belongs to the AB hydrolase superfamily. MetX family. Homodimer.

The protein localises to the cytoplasm. It catalyses the reaction L-homoserine + acetyl-CoA = O-acetyl-L-homoserine + CoA. It functions in the pathway amino-acid biosynthesis; L-methionine biosynthesis via de novo pathway; O-acetyl-L-homoserine from L-homoserine: step 1/1. Transfers an acetyl group from acetyl-CoA to L-homoserine, forming acetyl-L-homoserine. In Solidesulfovibrio magneticus (strain ATCC 700980 / DSM 13731 / RS-1) (Desulfovibrio magneticus), this protein is Homoserine O-acetyltransferase.